Here is a 174-residue protein sequence, read N- to C-terminus: Disulfide bond formation protein B (174 aa).

Topologically, residues 1–17 (MSFQVVTGWLDNSPRRI) are cytoplasmic. The chain crosses the membrane as a helical span at residues 18–34 (FAFVSLASIGMLAFGQY). Over 35–52 (LQHVVGLEPCPMCIVQRY) the chain is Periplasmic. Cys-44 and Cys-47 are disulfide-bonded. A helical membrane pass occupies residues 53–67 (ALVLVAIIAGLTGAS). Topologically, residues 68-74 (GRKGLHL) are cytoplasmic. The chain crosses the membrane as a helical span at residues 75–92 (GGAVLMLGSSGFGAYVAA). Over 93–148 (RQSWLQWYPPEVVSCGRDFYGMIETFPLQRAIPMIFKGSGDCSKVDWTFLGGSIAN) the chain is Periplasmic. Cys-107 and Cys-134 form a disulfide bridge. The helical transmembrane segment at 149–167 (WTFVVFGLIVLLSLALIWR) threads the bilayer. At 168-174 (RVSRRVS) the chain is on the cytoplasmic side.

The protein belongs to the DsbB family.

The protein resides in the cell inner membrane. In terms of biological role, required for disulfide bond formation in some periplasmic proteins. Acts by oxidizing the DsbA protein. This Albidiferax ferrireducens (strain ATCC BAA-621 / DSM 15236 / T118) (Rhodoferax ferrireducens) protein is Disulfide bond formation protein B.